Here is a 165-residue protein sequence, read N- to C-terminus: DELTA-actitoxin-Oor1a (165 aa).

Residues 1–17 form an N-terminal region region; it reads ATFRVLAKVLAELGKVS. Phosphocholine-binding residues include S41, V74, S92, P94, and Y125. The segment at 92–107 is trp-rich region, which is important for the binding to lipid membrane; the sequence is SVPYDYNLYSNWWNVK.

It belongs to the actinoporin family. Sea anemone subfamily. In terms of assembly, octamer or nonamer in membranes. Monomer in the soluble state.

It localises to the secreted. The protein localises to the nematocyst. Its subcellular location is the target cell membrane. Pore-forming protein that forms cations-selective hydrophilic pores of around 1 nm and causes cardiac stimulation and cytolysis. Pore formation is a multi-step process that involves specific recognition of membrane sphingomyelin (but neither cholesterol nor phosphatidylcholine) using aromatic rich region and adjacent phosphocholine (POC) binding site, firm binding to the membrane (mainly driven by hydrophobic interactions) accompanied by the transfer of the N-terminal region to the lipid-water interface and finally pore formation after oligomerization of monomers. Cytolytic effects include red blood cells hemolysis, platelet aggregation and lysis, cytotoxic and cytostatic effects on fibroblasts. Lethality in mammals has been ascribed to severe vasospasm of coronary vessels, cardiac arrhythmia, and inotropic effects. In Oulactis orientalis (Japan anemone), this protein is DELTA-actitoxin-Oor1a.